The following is a 311-amino-acid chain: Succinate dehydrogenase [ubiquinone] iron-sulfur subunit 2, mitochondrial (311 aa).

Residues methionine 1 to aspartate 63 constitute a mitochondrion transit peptide. The disordered stretch occupies residues methionine 1–alanine 70. Residues alanine 51–aspartate 63 show a composition bias toward basic and acidic residues. In terms of domain architecture, 2Fe-2S ferredoxin-type spans phenylalanine 77–methionine 168. 3 residues coordinate [2Fe-2S] cluster: cysteine 128, cysteine 133, and cysteine 148. Residues glutamate 211–phenylalanine 241 enclose the 4Fe-4S ferredoxin-type domain. Positions 221, 224, and 227 each coordinate [4Fe-4S] cluster. Residue cysteine 231 participates in [3Fe-4S] cluster binding. Tryptophan 236 lines the a ubiquinone pocket. [3Fe-4S] cluster contacts are provided by cysteine 279 and cysteine 285. Cysteine 289 contacts [4Fe-4S] cluster.

Belongs to the succinate dehydrogenase/fumarate reductase iron-sulfur protein family. Component of complex II composed of eight subunits in plants: four classical SDH subunits SDH1, SDH2, SDH3 and SDH4 (a flavoprotein (FP), an iron-sulfur protein (IP), and a cytochrome b composed of a large and a small subunit.), as well as four subunits unknown in mitochondria from bacteria and heterotrophic eukaryotes. It depends on [2Fe-2S] cluster as a cofactor. Requires [3Fe-4S] cluster as cofactor. [4Fe-4S] cluster is required as a cofactor.

It localises to the mitochondrion inner membrane. The enzyme catalyses a quinone + succinate = fumarate + a quinol. It functions in the pathway carbohydrate metabolism; tricarboxylic acid cycle; fumarate from succinate (eukaryal route): step 1/1. In terms of biological role, iron-sulfur protein (IP) subunit of succinate dehydrogenase (SDH) that is involved in complex II of the mitochondrial electron transport chain and is responsible for transferring electrons from succinate to ubiquinone (coenzyme Q). The sequence is that of Succinate dehydrogenase [ubiquinone] iron-sulfur subunit 2, mitochondrial from Oryza sativa subsp. japonica (Rice).